A 354-amino-acid chain; its full sequence is Elongation factor Ts, mitochondrial (354 aa).

Residues 1-47 constitute a mitochondrion transit peptide; it reads MMRSTLSLLQKCRLPNNNGSLLSFKNNQVVNQTALFSMKSNQQYRFY.

Belongs to the EF-Ts family.

Its subcellular location is the mitochondrion. Associates with the EF-Tu.GDP complex and induces the exchange of GDP to GTP. It remains bound to the aminoacyl-tRNA.EF-Tu.GTP complex up to the GTP hydrolysis stage on the ribosome. The polypeptide is Elongation factor Ts, mitochondrial (tsfm) (Heterostelium pallidum (strain ATCC 26659 / Pp 5 / PN500) (Cellular slime mold)).